A 201-amino-acid polypeptide reads, in one-letter code: Small ribosomal subunit protein uS4 (201 aa).

The segment at 21–43 is disordered; that stretch reads GTGKELNRRPYAPGDHGQGRRQK. Residues 93–153 form the S4 RNA-binding domain; it reads RRLDNMVYRL…EKSKDMAIIK (61 aa).

The protein belongs to the universal ribosomal protein uS4 family. As to quaternary structure, part of the 30S ribosomal subunit. Contacts protein S5. The interaction surface between S4 and S5 is involved in control of translational fidelity.

Functionally, one of the primary rRNA binding proteins, it binds directly to 16S rRNA where it nucleates assembly of the body of the 30S subunit. With S5 and S12 plays an important role in translational accuracy. The polypeptide is Small ribosomal subunit protein uS4 (Levilactobacillus brevis (strain ATCC 367 / BCRC 12310 / CIP 105137 / JCM 1170 / LMG 11437 / NCIMB 947 / NCTC 947) (Lactobacillus brevis)).